Reading from the N-terminus, the 458-residue chain is ATP synthase subunit beta (458 aa).

Residue 148-155 (GGAGVGKT) coordinates ATP.

The protein belongs to the ATPase alpha/beta chains family. F-type ATPases have 2 components, CF(1) - the catalytic core - and CF(0) - the membrane proton channel. CF(1) has five subunits: alpha(3), beta(3), gamma(1), delta(1), epsilon(1). CF(0) has three main subunits: a(1), b(2) and c(9-12). The alpha and beta chains form an alternating ring which encloses part of the gamma chain. CF(1) is attached to CF(0) by a central stalk formed by the gamma and epsilon chains, while a peripheral stalk is formed by the delta and b chains.

Its subcellular location is the cell inner membrane. The enzyme catalyses ATP + H2O + 4 H(+)(in) = ADP + phosphate + 5 H(+)(out). Functionally, produces ATP from ADP in the presence of a proton gradient across the membrane. The catalytic sites are hosted primarily by the beta subunits. The protein is ATP synthase subunit beta of Laribacter hongkongensis (strain HLHK9).